The chain runs to 76 residues: Conotoxin TsMLCL-03 (76 aa).

The first 19 residues, 1–19 (MLCLPVFIILLLLASPAAP), serve as a signal peptide directing secretion. Positions 20–44 (NPLERRIQSDLIRTALEDADMKTPK) are excised as a propeptide.

The protein belongs to the conotoxin T superfamily. In terms of processing, contains 2 disulfide bonds that can be either 'C1-C3, C2-C4' or 'C1-C4, C2-C3', since these disulfide connectivities have been observed for conotoxins with cysteine framework V (for examples, see AC P0DQQ7 and AC P81755). As to expression, expressed by the venom duct.

The protein resides in the secreted. The protein is Conotoxin TsMLCL-03 of Conus tessulatus (Tessellate cone).